The following is a 162-amino-acid chain: MNTKFPITAKGFEKLEHELKHLKHVERKKISEDIAEAREHGDLSENAEYEAAREKQAFIEGRIKELEDMTARAEIIDIGKLSGDNIKFGATVTLIDDDTEEEVTYIIVGEYEADITRKRVSIASPIAKALIGKSVGDFVEVTTPKGSKSYEVVTVEYKELEL.

A coiled-coil region spans residues 45 to 74 (ENAEYEAAREKQAFIEGRIKELEDMTARAE).

This sequence belongs to the GreA/GreB family.

Its function is as follows. Necessary for efficient RNA polymerase transcription elongation past template-encoded arresting sites. The arresting sites in DNA have the property of trapping a certain fraction of elongating RNA polymerases that pass through, resulting in locked ternary complexes. Cleavage of the nascent transcript by cleavage factors such as GreA or GreB allows the resumption of elongation from the new 3'terminus. GreA releases sequences of 2 to 3 nucleotides. The protein is Transcription elongation factor GreA of Rickettsia felis (strain ATCC VR-1525 / URRWXCal2) (Rickettsia azadi).